Here is a 785-residue protein sequence, read N- to C-terminus: Mitochondrial intermediate peptidase (785 aa).

A mitochondrion-targeting transit peptide spans 1-43 (MLTRPAQNALLKSMQPLFRFRGCLLAKSTSTPRRDISTSSRKL). Residue His567 coordinates Zn(2+). Glu568 is a catalytic residue. Zn(2+) contacts are provided by His571 and His574.

Belongs to the peptidase M3 family. The cofactor is Zn(2+).

It localises to the mitochondrion matrix. The catalysed reaction is Release of an N-terminal octapeptide as second stage of processing of some proteins imported into the mitochondrion.. Functionally, cleaves proteins, imported into the mitochondrion, to their mature size. While most mitochondrial precursor proteins are processed to the mature form in one step by mitochondrial processing peptidase (MPP), the sequential cleavage by MIP of an octapeptide after initial processing by MPP is a required step for a subgroup of nuclear-encoded precursor proteins destined for the matrix or the inner membrane. This Pleurotus djamor (Pink oyster mushroom) protein is Mitochondrial intermediate peptidase (OCT1).